The following is a 56-amino-acid chain: Zinc finger mu-protein HVO_0758 (56 aa).

Zn(2+) is bound by residues Cys-23, Cys-26, Cys-45, and Cys-48. Short sequence motifs (c(P)XCG motif) lie at residues 23 to 27 (CSECG) and 45 to 49 (CADCG).

Monomer.

Zinc-binding protein that binds one zinc ion. Is involved in biofilm formation, swarming and glycerol metabolism regulation. In Haloferax volcanii (strain ATCC 29605 / DSM 3757 / JCM 8879 / NBRC 14742 / NCIMB 2012 / VKM B-1768 / DS2) (Halobacterium volcanii), this protein is Zinc finger mu-protein HVO_0758.